The sequence spans 195 residues: MPKLGMQSIRRRQLIDATLEAINEVGMHDATIAQIARRAGVSTGIISHYFRDKNGLLEATMRDITSQLRDAVLNRLHALPQGSAEQRLQAIVGGNFDETQVSSAAMKAWLAFWASSMHQPMLYRLQQVSSRRLLSNLVSEFRRELPRQQAQEAGYGLAALIDGLWLRAALSGKPLDKPLAHSLTRHFITQHLPTD.

The region spanning 8–68 is the HTH tetR-type domain; that stretch reads SIRRRQLIDA…ATMRDITSQL (61 aa). Residues 31 to 50 constitute a DNA-binding region (H-T-H motif); sequence TIAQIARRAGVSTGIISHYF.

The protein operates within amine and polyamine biosynthesis; betaine biosynthesis via choline pathway [regulation]. Repressor involved in the biosynthesis of the osmoprotectant glycine betaine. It represses transcription of the choline transporter BetT and the genes of BetAB involved in the synthesis of glycine betaine. The chain is HTH-type transcriptional regulator BetI from Shigella flexneri serotype 5b (strain 8401).